Consider the following 122-residue polypeptide: Large ribosomal subunit protein uL14 (122 aa).

The protein belongs to the universal ribosomal protein uL14 family. As to quaternary structure, part of the 50S ribosomal subunit. Forms a cluster with proteins L3 and L19. In the 70S ribosome, L14 and L19 interact and together make contacts with the 16S rRNA in bridges B5 and B8.

Its function is as follows. Binds to 23S rRNA. Forms part of two intersubunit bridges in the 70S ribosome. This chain is Large ribosomal subunit protein uL14, found in Streptomyces avermitilis (strain ATCC 31267 / DSM 46492 / JCM 5070 / NBRC 14893 / NCIMB 12804 / NRRL 8165 / MA-4680).